A 118-amino-acid chain; its full sequence is Putative pterin-4-alpha-carbinolamine dehydratase (118 aa).

It belongs to the pterin-4-alpha-carbinolamine dehydratase family.

The enzyme catalyses (4aS,6R)-4a-hydroxy-L-erythro-5,6,7,8-tetrahydrobiopterin = (6R)-L-erythro-6,7-dihydrobiopterin + H2O. In Pseudomonas paraeruginosa (strain DSM 24068 / PA7) (Pseudomonas aeruginosa (strain PA7)), this protein is Putative pterin-4-alpha-carbinolamine dehydratase.